A 114-amino-acid chain; its full sequence is Dolichyl-diphosphooligosaccharide--protein glycosyltransferase subunit DAD2 (114 aa).

The Cytoplasmic segment spans residues 1–30; sequence MPKAAGDAKLLIQSLNKAYAATPTNLKIID. A helical transmembrane segment spans residues 31 to 51; the sequence is LYVVFAVATALVQVVYMGIVG. Over 52–54 the chain is Lumenal; that stretch reads SFP. A helical membrane pass occupies residues 55 to 75; it reads FNSFLSGVLSSIGTAVLGVCL. The Cytoplasmic segment spans residues 76–93; the sequence is RIQVNKDNKEFKDLPPER. The helical transmembrane segment at 94–114 threads the bilayer; sequence AFADFVLCNLVLHLVIMNFLG.

The protein belongs to the DAD/OST2 family. In terms of assembly, component of the oligosaccharyltransferase (OST) complex.

It localises to the endoplasmic reticulum membrane. It participates in protein modification; protein glycosylation. Its function is as follows. Subunit of the oligosaccharyl transferase (OST) complex that catalyzes the initial transfer of a defined glycan (Glc(3)Man(9)GlcNAc(2) in eukaryotes) from the lipid carrier dolichol-pyrophosphate to an asparagine residue within an Asn-X-Ser/Thr consensus motif in nascent polypeptide chains, the first step in protein N-glycosylation. N-glycosylation occurs cotranslationally and the complex associates with the Sec61 complex at the channel-forming translocon complex that mediates protein translocation across the endoplasmic reticulum (ER). All subunits are required for a maximal enzyme activity. This chain is Dolichyl-diphosphooligosaccharide--protein glycosyltransferase subunit DAD2 (DAD2), found in Hordeum vulgare (Barley).